A 291-amino-acid polypeptide reads, in one-letter code: Glycine--tRNA ligase alpha subunit (291 aa).

It belongs to the class-II aminoacyl-tRNA synthetase family. Tetramer of two alpha and two beta subunits.

It localises to the cytoplasm. The catalysed reaction is tRNA(Gly) + glycine + ATP = glycyl-tRNA(Gly) + AMP + diphosphate. The sequence is that of Glycine--tRNA ligase alpha subunit from Trichlorobacter lovleyi (strain ATCC BAA-1151 / DSM 17278 / SZ) (Geobacter lovleyi).